We begin with the raw amino-acid sequence, 333 residues long: Ribosomal RNA small subunit methyltransferase H (333 aa).

Residues 34-36 (GGH), aspartate 59, phenylalanine 86, aspartate 112, and glutamine 119 contribute to the S-adenosyl-L-methionine site.

This sequence belongs to the methyltransferase superfamily. RsmH family.

The protein localises to the cytoplasm. The enzyme catalyses cytidine(1402) in 16S rRNA + S-adenosyl-L-methionine = N(4)-methylcytidine(1402) in 16S rRNA + S-adenosyl-L-homocysteine + H(+). Functionally, specifically methylates the N4 position of cytidine in position 1402 (C1402) of 16S rRNA. This is Ribosomal RNA small subunit methyltransferase H from Prosthecochloris aestuarii (strain DSM 271 / SK 413).